A 1073-amino-acid chain; its full sequence is Carbamoyl phosphate synthase large chain (1073 aa).

Positions P2 to E403 are carboxyphosphate synthetic domain. ATP-binding residues include R129, R169, G175, G176, E208, L210, E215, G241, I242, H243, Q285, and E299. Residues D133–V328 enclose the ATP-grasp 1 domain. Positions 285, 299, and 301 each coordinate Mg(2+). The Mn(2+) site is built by Q285, E299, and N301. The oligomerization domain stretch occupies residues V404–A553. The carbamoyl phosphate synthetic domain stretch occupies residues N554–N936. The region spanning Q679–A870 is the ATP-grasp 2 domain. Residues R715, H754, L756, E761, G786, V787, H788, S789, Q829, and E841 each coordinate ATP. Q829, E841, and N843 together coordinate Mg(2+). Q829, E841, and N843 together coordinate Mn(2+). Residues S937 to K1073 form the MGS-like domain. The interval S937–K1073 is allosteric domain.

The protein belongs to the CarB family. In terms of assembly, composed of two chains; the small (or glutamine) chain promotes the hydrolysis of glutamine to ammonia, which is used by the large (or ammonia) chain to synthesize carbamoyl phosphate. Tetramer of heterodimers (alpha,beta)4. Mg(2+) serves as cofactor. Requires Mn(2+) as cofactor.

The catalysed reaction is hydrogencarbonate + L-glutamine + 2 ATP + H2O = carbamoyl phosphate + L-glutamate + 2 ADP + phosphate + 2 H(+). It catalyses the reaction hydrogencarbonate + NH4(+) + 2 ATP = carbamoyl phosphate + 2 ADP + phosphate + 2 H(+). It participates in amino-acid biosynthesis; L-arginine biosynthesis; carbamoyl phosphate from bicarbonate: step 1/1. The protein operates within pyrimidine metabolism; UMP biosynthesis via de novo pathway; (S)-dihydroorotate from bicarbonate: step 1/3. Large subunit of the glutamine-dependent carbamoyl phosphate synthetase (CPSase). CPSase catalyzes the formation of carbamoyl phosphate from the ammonia moiety of glutamine, carbonate, and phosphate donated by ATP, constituting the first step of 2 biosynthetic pathways, one leading to arginine and/or urea and the other to pyrimidine nucleotides. The large subunit (synthetase) binds the substrates ammonia (free or transferred from glutamine from the small subunit), hydrogencarbonate and ATP and carries out an ATP-coupled ligase reaction, activating hydrogencarbonate by forming carboxy phosphate which reacts with ammonia to form carbamoyl phosphate. The protein is Carbamoyl phosphate synthase large chain of Escherichia coli O6:H1 (strain CFT073 / ATCC 700928 / UPEC).